We begin with the raw amino-acid sequence, 304 residues long: Acetylglutamate kinase (304 aa).

Residues 77 to 78, arginine 99, and asparagine 201 contribute to the substrate site; that span reads GG.

The protein belongs to the acetylglutamate kinase family. ArgB subfamily.

The protein resides in the cytoplasm. The enzyme catalyses N-acetyl-L-glutamate + ATP = N-acetyl-L-glutamyl 5-phosphate + ADP. It participates in amino-acid biosynthesis; L-arginine biosynthesis; N(2)-acetyl-L-ornithine from L-glutamate: step 2/4. Catalyzes the ATP-dependent phosphorylation of N-acetyl-L-glutamate. The protein is Acetylglutamate kinase of Methylibium petroleiphilum (strain ATCC BAA-1232 / LMG 22953 / PM1).